Consider the following 582-residue polypeptide: MEPSKLFIMSDNATFAPGPVVNAAGKKTFRTCFRILVLSVQAVTLILVIVTLGELIRMINDQGLSNQLSSITDKIRESAAMIASAVGVMNQVIHGVTVSLPLQIEGNQNQLLSTLATICTNRNQVSNCSTNIPLVNDLRFINGINKFIIEDYATHDFSIGHPLNMPSFIPTATSPNGCTRIPSFSLGKTHWCYTHNVINANCKDHTSSNQYVSMGILVQTASGYPMFKTLKIQYLSDGLNRKSCSIATVPDGCAMYCYVSTQLETDDYAGSSPPTQKLTLLFYNDTIKERTISPSGLEGNWATLVPGVGSGIYFENKLIFPAYGGVLPNSTLGVKSAREFFRPVNPYNPCSGPPQELDQRALRSYFPSYFSSRRVQSAFLVCAWNQILVTNCELVVPSNNQTLMGAEGRVLLINNRLLYYQRSTSWWPYELLYEISFTFTNSGQSSVNMSWIPIYSFTRPGLGKCSGENICPTVCVSGVYLDPWPLTPYSHQSGINRNFYFTGALLNSSTTRVNPTLYVSALNNLKVLAPYGTQGLFASYTTTTCFQDTGDASVYCVYIMELASNIVGEFQILPVLARLTIT.

A helical membrane pass occupies residues 35 to 55 (ILVLSVQAVTLILVIVTLGEL). 3 cysteine pairs are disulfide-bonded: Cys178–Cys202, Cys192–Cys253, and Cys244–Cys257. N-linked (GlcNAc...) asparagine; by host glycans are attached at residues Asn284 and Asn329. 3 cysteine pairs are disulfide-bonded: Cys350-Cys471, Cys382-Cys392, and Cys465-Cys475. N-linked (GlcNAc...) asparagine; by host glycans are attached at residues Asn400 and Asn448. Residue Asn507 is glycosylated (N-linked (GlcNAc...) asparagine; by host). An intrachain disulfide couples Cys545 to Cys556.

This sequence belongs to the paramyxoviruses hemagglutinin-neuraminidase family. In terms of assembly, homodimer. Further forms homotetramer (dimer of dimers). Interacts with F protein trimer.

Its subcellular location is the virion membrane. The protein resides in the host cell membrane. The catalysed reaction is Hydrolysis of alpha-(2-&gt;3)-, alpha-(2-&gt;6)-, alpha-(2-&gt;8)- glycosidic linkages of terminal sialic acid residues in oligosaccharides, glycoproteins, glycolipids, colominic acid and synthetic substrates.. Its function is as follows. Attaches the virus to alpha-2,3-linked sialic acid-containing cell receptors and thereby initiating infection. Binding of HN protein to the receptor induces a conformational change that allows the F protein to trigger virion/cell membranes fusion. Binds to the glycan motifs sialyl Lewis (SLe) and GM2 ganglioside (GM2-glycan). Neuraminidase activity ensures the efficient spread of the virus by dissociating the mature virions from the neuraminic acid containing glycoproteins. The polypeptide is Hemagglutinin-neuraminidase (HN) (Homo sapiens (Human)).